A 249-amino-acid polypeptide reads, in one-letter code: Putative TrmH family tRNA/rRNA methyltransferase (249 aa).

3 residues coordinate S-adenosyl-L-methionine: Gly-196, Ile-216, and Leu-225.

It belongs to the class IV-like SAM-binding methyltransferase superfamily. RNA methyltransferase TrmH family.

The sequence is that of Putative TrmH family tRNA/rRNA methyltransferase from Staphylococcus epidermidis (strain ATCC 35984 / DSM 28319 / BCRC 17069 / CCUG 31568 / BM 3577 / RP62A).